Consider the following 323-residue polypeptide: Probable cell division protein WhiA (323 aa).

The segment at residues 275–309 is a DNA-binding region (H-T-H motif); the sequence is TLKELGEMLTTGQVSKSGINHRLRKLDQIAERLRS.

The protein belongs to the WhiA family.

Functionally, involved in cell division and chromosome segregation. The sequence is that of Probable cell division protein WhiA from Listeria monocytogenes serotype 4b (strain CLIP80459).